Consider the following 349-residue polypeptide: UDP-glucose 4-epimerase (349 aa).

NAD(+)-binding positions include 10 to 12 (GFI), 31 to 35 (DNFAN), 66 to 67 (DV), and Lys92. Substrate is bound at residue 132-134 (SAT). Tyr158 (proton acceptor) is an active-site residue. Positions 162 and 186 each coordinate NAD(+). Substrate is bound by residues 186–188 (YFN), 207–209 (NNL), 225–227 (TIY), Arg240, and 303–306 (RPGD).

It belongs to the NAD(P)-dependent epimerase/dehydratase family. NAD(+) is required as a cofactor. As to expression, expressed in gonads, vulva, intestine, hypdermis and nervous system.

The enzyme catalyses UDP-alpha-D-glucose = UDP-alpha-D-galactose. It catalyses the reaction UDP-N-acetyl-alpha-D-glucosamine = UDP-N-acetyl-alpha-D-galactosamine. It participates in carbohydrate metabolism; galactose metabolism. Catalyzes two distinct but analogous reactions: the reversible epimerization of UDP-glucose to UDP-galactose and the reversible epimerization of UDP-N-acetylglucosamine to UDP-N-acetylgalactosamine. The reaction with UDP-Gal plays a critical role in the Leloir pathway of galactose catabolism in which galactose is converted to the glycolytic intermediate glucose 6-phosphate. It contributes to the catabolism of dietary galactose and enables the endogenous biosynthesis of both UDP-Gal and UDP-GalNAc when exogenous sources are limited. Both UDP-sugar interconversions are important for the synthesis of glycoproteins and glycolipids. This is UDP-glucose 4-epimerase from Caenorhabditis elegans.